A 124-amino-acid chain; its full sequence is Insulin growth factor-like family member 4 (124 aa).

Residues 1 to 19 form the signal peptide; sequence MVPRISAAIFIFELLGSNS. N-linked (GlcNAc...) asparagine glycans are attached at residues Asn-57 and Asn-84.

It belongs to the IGFL family. As to expression, detected in the cerebellum.

Its subcellular location is the secreted. This chain is Insulin growth factor-like family member 4 (IGFL4), found in Homo sapiens (Human).